The sequence spans 166 residues: Interferon gamma (166 aa).

The signal sequence occupies residues 1–23; the sequence is MKYTSYILAFQLCIVLGSLGCYC. A Pyrrolidone carboxylic acid modification is found at glutamine 24. Asparagine 48 is a glycosylation site (N-linked (GlcNAc...) asparagine). Residue asparagine 120 is glycosylated (N-linked (GlcNAc...) asparagine; in dimeric form). A disordered region spans residues 147 to 166; sequence AKTGKRKRSQMLFRGRRASQ. Over residues 149–166 the composition is skewed to basic residues; it reads TGKRKRSQMLFRGRRASQ. The propeptide occupies 162-166; it reads RRASQ.

This sequence belongs to the type II (or gamma) interferon family. As to quaternary structure, homodimer. Interacts with IFNGR1 (via extracellular domain); this interaction promotes IFNGR1 dimerization. In terms of processing, proteolytic processing produces C-terminal heterogeneity, with proteins ending alternatively at Gly-150, Met-157 or Gly-161. As to expression, released primarily from activated T lymphocytes.

Its subcellular location is the secreted. Type II interferon produced by immune cells such as T-cells and NK cells that plays crucial roles in antimicrobial, antiviral, and antitumor responses by activating effector immune cells and enhancing antigen presentation. Primarily signals through the JAK-STAT pathway after interaction with its receptor IFNGR1 to affect gene regulation. Upon IFNG binding, IFNGR1 intracellular domain opens out to allow association of downstream signaling components JAK2, JAK1 and STAT1, leading to STAT1 activation, nuclear translocation and transcription of IFNG-regulated genes. Many of the induced genes are transcription factors such as IRF1 that are able to further drive regulation of a next wave of transcription. Plays a role in class I antigen presentation pathway by inducing a replacement of catalytic proteasome subunits with immunoproteasome subunits. In turn, increases the quantity, quality, and repertoire of peptides for class I MHC loading. Increases the efficiency of peptide generation also by inducing the expression of activator PA28 that associates with the proteasome and alters its proteolytic cleavage preference. Up-regulates as well MHC II complexes on the cell surface by promoting expression of several key molecules such as cathepsins B/CTSB, H/CTSH, and L/CTSL. Participates in the regulation of hematopoietic stem cells during development and under homeostatic conditions by affecting their development, quiescence, and differentiation. The polypeptide is Interferon gamma (IFNG) (Homo sapiens (Human)).